The sequence spans 161 residues: MDFRIGQGYDVHQLVEGRPLIIGGVTIPYERGLLGHSDADVLLHAITDALFGAAALGDIGRHFSDTDAAFKGADSRVLLRACAERVKAAGFTIQNVDSTVIAQAPKLAPHIDGMRANIAADLGLPLERVNVKAKTNEKLGYLGRGEGIEAQAAALLVKQGG.

A divalent metal cation is bound by residues aspartate 10 and histidine 12. Residues 10-12 (DVH) and 36-37 (HS) each bind 4-CDP-2-C-methyl-D-erythritol 2-phosphate. Histidine 44 is a binding site for a divalent metal cation. Residues 58 to 60 (DIG), 63 to 67 (FSDTD), and arginine 144 contribute to the 4-CDP-2-C-methyl-D-erythritol 2-phosphate site.

This sequence belongs to the IspF family. As to quaternary structure, homotrimer. It depends on a divalent metal cation as a cofactor.

It carries out the reaction 4-CDP-2-C-methyl-D-erythritol 2-phosphate = 2-C-methyl-D-erythritol 2,4-cyclic diphosphate + CMP. Its pathway is isoprenoid biosynthesis; isopentenyl diphosphate biosynthesis via DXP pathway; isopentenyl diphosphate from 1-deoxy-D-xylulose 5-phosphate: step 4/6. Functionally, involved in the biosynthesis of isopentenyl diphosphate (IPP) and dimethylallyl diphosphate (DMAPP), two major building blocks of isoprenoid compounds. Catalyzes the conversion of 4-diphosphocytidyl-2-C-methyl-D-erythritol 2-phosphate (CDP-ME2P) to 2-C-methyl-D-erythritol 2,4-cyclodiphosphate (ME-CPP) with a corresponding release of cytidine 5-monophosphate (CMP). This chain is 2-C-methyl-D-erythritol 2,4-cyclodiphosphate synthase, found in Burkholderia cenocepacia (strain HI2424).